The sequence spans 335 residues: DNA polymerase beta (335 aa).

Lys-41 participates in a covalent cross-link: Glycyl lysine isopeptide (Lys-Gly) (interchain with G-Cter in ubiquitin). Lys-60 lines the K(+) pocket. Lys-60 provides a ligand contact to Na(+). Residue Lys-61 forms a Glycyl lysine isopeptide (Lys-Gly) (interchain with G-Cter in ubiquitin) linkage. Residues Leu-62 and Val-65 each contribute to the K(+) site. Positions 62 and 65 each coordinate Na(+). Lys-72 functions as the Nucleophile; Schiff-base intermediate with DNA; for 5'-dRP lyase activity in the catalytic mechanism. Lys-72 carries the N6-acetyllysine modification. Lys-81 participates in a covalent cross-link: Glycyl lysine isopeptide (Lys-Gly) (interchain with G-Cter in ubiquitin). Omega-N-methylarginine; by PRMT6 is present on Arg-83. Thr-101, Val-103, and Ile-106 together coordinate K(+). Thr-101, Val-103, and Ile-106 together coordinate Na(+). Arg-149 provides a ligand contact to dATP. Residue Arg-149 participates in dCTP binding. Residue Arg-149 participates in dGTP binding. Position 149 (Arg-149) interacts with dTTP. Arg-152 is modified (omega-N-methylarginine; by PRMT6). 4 residues coordinate dATP: Ser-180, Arg-183, Gly-189, and Asp-190. DCTP-binding residues include Ser-180, Arg-183, Gly-189, and Asp-190. 5 residues coordinate dGTP: Ser-180, Arg-183, Gly-189, Asp-190, and Asp-192. DTTP is bound by residues Ser-180, Arg-183, Gly-189, and Asp-190. Residues 183–192 are DNA-binding; the sequence is RGAESSGDMD. Residues Asp-190, Asp-192, and Asp-256 each coordinate Mg(2+).

The protein belongs to the DNA polymerase type-X family. As to quaternary structure, monomer. Binds single-stranded DNA (ssDNA). Interacts with APEX1, LIG1, LIG3, FEN1, PCNA and XRCC1. Interacts with HUWE1/ARF-BP1, STUB1/CHIP and USP47. Interacts with FAM168A. Mg(2+) serves as cofactor. Post-translationally, methylation by PRMT6 stimulates the polymerase activity by enhancing DNA binding and processivity. In terms of processing, ubiquitinated at Lys-41, Lys-61 and Lys-81: monoubiquitinated by HUWE1/ARF-BP1. Monoubiquitinated protein is then the target of STUB1/CHIP, which catalyzes polyubiquitination from monoubiquitin, leading to degradation by the proteasome. USP47 mediates the deubiquitination of monoubiquitinated protein, preventing polyubiquitination by STUB1/CHIP and its subsequent degradation.

The protein resides in the nucleus. It localises to the cytoplasm. It catalyses the reaction DNA(n) + a 2'-deoxyribonucleoside 5'-triphosphate = DNA(n+1) + diphosphate. The enzyme catalyses a 5'-end 2'-deoxyribose-2'-deoxyribonucleotide-DNA = (2E,4S)-4-hydroxypenten-2-al-5-phosphate + a 5'-end 5'-phospho-2'-deoxyribonucleoside-DNA + H(+). It carries out the reaction 2'-deoxyribonucleotide-(2'-deoxyribose 5'-phosphate)-2'-deoxyribonucleotide-DNA = a 3'-end 2'-deoxyribonucleotide-(2,3-dehydro-2,3-deoxyribose 5'-phosphate)-DNA + a 5'-end 5'-phospho-2'-deoxyribonucleoside-DNA + H(+). Functionally, repair polymerase that plays a key role in base-excision repair. During this process, the damaged base is excised by specific DNA glycosylases, the DNA backbone is nicked at the abasic site by an apurinic/apyrimidic (AP) endonuclease, and POLB removes 5'-deoxyribose-phosphate from the preincised AP site acting as a 5'-deoxyribose-phosphate lyase (5'-dRP lyase); through its DNA polymerase activity, it adds one nucleotide to the 3' end of the arising single-nucleotide gap. Conducts 'gap-filling' DNA synthesis in a stepwise distributive fashion rather than in a processive fashion as for other DNA polymerases. It is also able to cleave sugar-phosphate bonds 3' to an intact AP site, acting as an AP lyase. This is DNA polymerase beta (POLB) from Homo sapiens (Human).